An 882-amino-acid chain; its full sequence is Pyruvate dehydrogenase E1 component (882 aa).

Homodimer. Part of the PDH complex, consisting of multiple copies of pyruvate dehydrogenase (E1), dihydrolipoamide acetyltransferase (E2) and lipoamide dehydrogenase (E3). Thiamine diphosphate serves as cofactor.

It catalyses the reaction N(6)-[(R)-lipoyl]-L-lysyl-[protein] + pyruvate + H(+) = N(6)-[(R)-S(8)-acetyldihydrolipoyl]-L-lysyl-[protein] + CO2. Its function is as follows. Component of the pyruvate dehydrogenase (PDH) complex, that catalyzes the overall conversion of pyruvate to acetyl-CoA and CO(2). This chain is Pyruvate dehydrogenase E1 component (aceE), found in Pseudomonas aeruginosa (strain ATCC 15692 / DSM 22644 / CIP 104116 / JCM 14847 / LMG 12228 / 1C / PRS 101 / PAO1).